The sequence spans 406 residues: Large ribosomal subunit protein uL4z (406 aa).

The disordered stretch occupies residues 56-95 (PYAVSKKAGHQTSAESWGTGRAVSRIPRVPGGGTHRAGQA).

This sequence belongs to the universal ribosomal protein uL4 family.

This Arabidopsis thaliana (Mouse-ear cress) protein is Large ribosomal subunit protein uL4z (RPL4A).